The chain runs to 418 residues: Adenylosuccinate synthetase 2 (418 aa).

Residues 12 to 18 and 40 to 42 each bind GTP; these read GDEGKGR and GHT. Aspartate 13 serves as the catalytic Proton acceptor. Mg(2+) contacts are provided by aspartate 13 and glycine 40. Residues 13–16, 38–41, threonine 127, lysine 141, threonine 239, and arginine 301 each bind IMP; these read DEGK and NAGH. Histidine 41 acts as the Proton donor in catalysis. 297–303 provides a ligand contact to substrate; sequence AVTGRPR. GTP contacts are provided by residues arginine 303, 329-331, and 407-409; these read KID and SVG.

Belongs to the adenylosuccinate synthetase family. Homodimer. Mg(2+) serves as cofactor.

It localises to the cytoplasm. It carries out the reaction IMP + L-aspartate + GTP = N(6)-(1,2-dicarboxyethyl)-AMP + GDP + phosphate + 2 H(+). Its pathway is purine metabolism; AMP biosynthesis via de novo pathway; AMP from IMP: step 1/2. In terms of biological role, plays an important role in the de novo pathway of purine nucleotide biosynthesis. Catalyzes the first committed step in the biosynthesis of AMP from IMP. This is Adenylosuccinate synthetase 2 from Pseudoalteromonas translucida (strain TAC 125).